The primary structure comprises 617 residues: MNTENRSPEQFDIPLFLKNLPKLPGVYRFFDEGGNVLYVGKAVNLKRRVSGYFQKNDHSPRIALMVKQVRHIETTITRSEAEALILENNFIKALSPKYNILFRDDKSYPYLMLSGHQYPQMAYYRGTLKNPNQYFGPYPNSNAVRDSIQVLQKVFMLRTCEDSVFEHRDRPCLLYQIKRCTAPCVGHISEEDYCDSVRQAATFLNGKTDELTRTLQHKMQTAAANLQFEEAARYRDQIQALGIIQSNQFIDSKNPNNPNDIDLLALAVSDGLVCVHWVSIRGGRHVGDKSFFPDTKNDPEPNGQDYAEAFVAQHYLGKSKPDIIISNFPVPDALKEALEGEHGKQMQFVTKTIGERKVWLKMAEQNAQMAITQRHLQQSNQQHRIDELAKILGMNSDGINRLECFDISHTQGEATIASCVVYDEQNIQPSQYRRYNITTAKPGDDYAAMREVLTRRYGKIQEAEANGESVKWPDVVLIDGGKGQIGVAVSVWEELGLHIPLVGIAKGPERKAGMEELILPFTGELFRLPPNSPALHLLQTVRDESHRFAITGHRKKRDKARVTSSLGDIPGVGSKRRQALLTRFGGLRGVIAASREDLEKVEGISKALAETIYNHLH.

The region spanning 22 to 100 (KLPGVYRFFD…IKALSPKYNI (79 aa)) is the GIY-YIG domain. In terms of domain architecture, UVR spans 209-244 (DELTRTLQHKMQTAAANLQFEEAARYRDQIQALGII).

It belongs to the UvrC family. As to quaternary structure, interacts with UvrB in an incision complex.

The protein resides in the cytoplasm. In terms of biological role, the UvrABC repair system catalyzes the recognition and processing of DNA lesions. UvrC both incises the 5' and 3' sides of the lesion. The N-terminal half is responsible for the 3' incision and the C-terminal half is responsible for the 5' incision. This Neisseria gonorrhoeae (strain ATCC 700825 / FA 1090) protein is UvrABC system protein C.